The sequence spans 373 residues: Queuine tRNA-ribosyltransferase (373 aa).

Residue aspartate 90 is the Proton acceptor of the active site. Residues 90–94 (DSGGF), aspartate 144, glutamine 193, and glycine 220 each bind substrate. The RNA binding stretch occupies residues 251 to 257 (GVGTPED). Residue aspartate 270 is the Nucleophile of the active site. Residues 275 to 279 (TRNAR) form an RNA binding; important for wobble base 34 recognition region. Residues cysteine 308, cysteine 310, cysteine 313, and histidine 339 each coordinate Zn(2+).

It belongs to the queuine tRNA-ribosyltransferase family. In terms of assembly, homodimer. Within each dimer, one monomer is responsible for RNA recognition and catalysis, while the other monomer binds to the replacement base PreQ1. Requires Zn(2+) as cofactor.

The enzyme catalyses 7-aminomethyl-7-carbaguanine + guanosine(34) in tRNA = 7-aminomethyl-7-carbaguanosine(34) in tRNA + guanine. The protein operates within tRNA modification; tRNA-queuosine biosynthesis. Its function is as follows. Catalyzes the base-exchange of a guanine (G) residue with the queuine precursor 7-aminomethyl-7-deazaguanine (PreQ1) at position 34 (anticodon wobble position) in tRNAs with GU(N) anticodons (tRNA-Asp, -Asn, -His and -Tyr). Catalysis occurs through a double-displacement mechanism. The nucleophile active site attacks the C1' of nucleotide 34 to detach the guanine base from the RNA, forming a covalent enzyme-RNA intermediate. The proton acceptor active site deprotonates the incoming PreQ1, allowing a nucleophilic attack on the C1' of the ribose to form the product. After dissociation, two additional enzymatic reactions on the tRNA convert PreQ1 to queuine (Q), resulting in the hypermodified nucleoside queuosine (7-(((4,5-cis-dihydroxy-2-cyclopenten-1-yl)amino)methyl)-7-deazaguanosine). The chain is Queuine tRNA-ribosyltransferase from Campylobacter jejuni subsp. jejuni serotype O:6 (strain 81116 / NCTC 11828).